The following is a 129-amino-acid chain: Small ribosomal subunit protein uS11 (129 aa).

This sequence belongs to the universal ribosomal protein uS11 family. In terms of assembly, part of the 30S ribosomal subunit. Interacts with proteins S7 and S18. Binds to IF-3.

Functionally, located on the platform of the 30S subunit, it bridges several disparate RNA helices of the 16S rRNA. Forms part of the Shine-Dalgarno cleft in the 70S ribosome. The chain is Small ribosomal subunit protein uS11 from Mycoplasma mycoides subsp. mycoides SC (strain CCUG 32753 / NCTC 10114 / PG1).